We begin with the raw amino-acid sequence, 124 residues long: Small ribosomal subunit protein uS12 (124 aa).

Asp89 is subject to 3-methylthioaspartic acid.

This sequence belongs to the universal ribosomal protein uS12 family. In terms of assembly, part of the 30S ribosomal subunit. Contacts proteins S8 and S17. May interact with IF1 in the 30S initiation complex.

Its function is as follows. With S4 and S5 plays an important role in translational accuracy. In terms of biological role, interacts with and stabilizes bases of the 16S rRNA that are involved in tRNA selection in the A site and with the mRNA backbone. Located at the interface of the 30S and 50S subunits, it traverses the body of the 30S subunit contacting proteins on the other side and probably holding the rRNA structure together. The combined cluster of proteins S8, S12 and S17 appears to hold together the shoulder and platform of the 30S subunit. The sequence is that of Small ribosomal subunit protein uS12 from Shewanella sediminis (strain HAW-EB3).